The chain runs to 354 residues: Uroporphyrinogen decarboxylase (354 aa).

Substrate contacts are provided by residues 27 to 31, aspartate 77, tyrosine 153, threonine 208, and histidine 326; that span reads RQAGR.

It belongs to the uroporphyrinogen decarboxylase family. As to quaternary structure, homodimer.

Its subcellular location is the cytoplasm. It catalyses the reaction uroporphyrinogen III + 4 H(+) = coproporphyrinogen III + 4 CO2. Its pathway is porphyrin-containing compound metabolism; protoporphyrin-IX biosynthesis; coproporphyrinogen-III from 5-aminolevulinate: step 4/4. Functionally, catalyzes the decarboxylation of four acetate groups of uroporphyrinogen-III to yield coproporphyrinogen-III. This Neisseria gonorrhoeae (strain NCCP11945) protein is Uroporphyrinogen decarboxylase.